The sequence spans 510 residues: 2-isopropylmalate synthase (510 aa).

A Pyruvate carboxyltransferase domain is found at 5–267 (LVIFDTTLRD…DTRIDTTQIV (263 aa)). Mn(2+) contacts are provided by Asp-14, His-202, His-204, and Asn-238. The tract at residues 392 to 510 (RLLSLVAHSE…SSLERTHPQV (119 aa)) is regulatory domain.

Belongs to the alpha-IPM synthase/homocitrate synthase family. LeuA type 1 subfamily. As to quaternary structure, homodimer. It depends on Mn(2+) as a cofactor.

The protein localises to the cytoplasm. The catalysed reaction is 3-methyl-2-oxobutanoate + acetyl-CoA + H2O = (2S)-2-isopropylmalate + CoA + H(+). The protein operates within amino-acid biosynthesis; L-leucine biosynthesis; L-leucine from 3-methyl-2-oxobutanoate: step 1/4. Functionally, catalyzes the condensation of the acetyl group of acetyl-CoA with 3-methyl-2-oxobutanoate (2-ketoisovalerate) to form 3-carboxy-3-hydroxy-4-methylpentanoate (2-isopropylmalate). This is 2-isopropylmalate synthase from Nitrosomonas eutropha (strain DSM 101675 / C91 / Nm57).